Consider the following 294-residue polypeptide: UDP-3-O-acyl-N-acetylglucosamine deacetylase (294 aa).

3 residues coordinate Zn(2+): His-75, His-232, and Asp-236. The Proton donor role is filled by His-259.

Belongs to the LpxC family. Zn(2+) serves as cofactor.

The catalysed reaction is a UDP-3-O-[(3R)-3-hydroxyacyl]-N-acetyl-alpha-D-glucosamine + H2O = a UDP-3-O-[(3R)-3-hydroxyacyl]-alpha-D-glucosamine + acetate. It functions in the pathway glycolipid biosynthesis; lipid IV(A) biosynthesis; lipid IV(A) from (3R)-3-hydroxytetradecanoyl-[acyl-carrier-protein] and UDP-N-acetyl-alpha-D-glucosamine: step 2/6. Its function is as follows. Catalyzes the hydrolysis of UDP-3-O-myristoyl-N-acetylglucosamine to form UDP-3-O-myristoylglucosamine and acetate, the committed step in lipid A biosynthesis. In Campylobacter fetus subsp. fetus (strain 82-40), this protein is UDP-3-O-acyl-N-acetylglucosamine deacetylase.